A 190-amino-acid chain; its full sequence is UPF0301 protein Rmet_2743 (190 aa).

The protein belongs to the UPF0301 (AlgH) family.

The protein is UPF0301 protein Rmet_2743 of Cupriavidus metallidurans (strain ATCC 43123 / DSM 2839 / NBRC 102507 / CH34) (Ralstonia metallidurans).